We begin with the raw amino-acid sequence, 430 residues long: Xaa-Pro aminopeptidase (430 aa).

Mn(2+) contacts are provided by Asp-254, Asp-265, His-348, Glu-377, and Glu-400.

The protein belongs to the peptidase M24B family. Homotetramer. Mn(2+) is required as a cofactor.

It catalyses the reaction Release of any N-terminal amino acid, including proline, that is linked to proline, even from a dipeptide or tripeptide.. The protein is Xaa-Pro aminopeptidase (pepP) of Haemophilus influenzae (strain ATCC 51907 / DSM 11121 / KW20 / Rd).